Here is a 260-residue protein sequence, read N- to C-terminus: Deoxycytidine kinase (260 aa).

A phosphoserine; by CK1 mark is found at S11 and S15. An ATP-binding site is contributed by 28–36 (GNIAAGKST). E53 contacts substrate. T72 is subject to Phosphothreonine; by CK1. At S74 the chain carries Phosphoserine; by CK1. Residues Y86 and Q97 each contribute to the substrate site. E127 acts as the Proton acceptor in catalysis. Residues R128 and D133 each coordinate substrate. Residue 188-192 (RIYLR) coordinates ATP. E197 contacts substrate. Position 240–242 (240–242 (EDF)) interacts with ATP.

This sequence belongs to the DCK/DGK family. Homodimer. In terms of processing, phosphorylated and activated in vitro upon phosphorylation at Ser-74 by CSNK1D/CK1.

Its subcellular location is the nucleus. It carries out the reaction 2'-deoxycytidine + a ribonucleoside 5'-triphosphate = dCMP + a ribonucleoside 5'-diphosphate + H(+). The catalysed reaction is 2'-deoxyadenosine + ATP = dAMP + ADP + H(+). The enzyme catalyses 2'-deoxyguanosine + ATP = dGMP + ADP + H(+). Phosphorylates the deoxyribonucleosides deoxycytidine, deoxyguanosine and deoxyadenosine. The chain is Deoxycytidine kinase (DCK) from Bos taurus (Bovine).